We begin with the raw amino-acid sequence, 103 residues long: Nucleoid-associated protein A2cp1_3777 (103 aa).

Belongs to the YbaB/EbfC family. As to quaternary structure, homodimer.

The protein resides in the cytoplasm. It is found in the nucleoid. In terms of biological role, binds to DNA and alters its conformation. May be involved in regulation of gene expression, nucleoid organization and DNA protection. This chain is Nucleoid-associated protein A2cp1_3777, found in Anaeromyxobacter dehalogenans (strain 2CP-1 / ATCC BAA-258).